A 418-amino-acid chain; its full sequence is UDP-N-acetylglucosamine 1-carboxyvinyltransferase (418 aa).

22-23 is a binding site for phosphoenolpyruvate; the sequence is KN. Arg-92 lines the UDP-N-acetyl-alpha-D-glucosamine pocket. Residue Cys-116 is the Proton donor of the active site. The residue at position 116 (Cys-116) is a 2-(S-cysteinyl)pyruvic acid O-phosphothioketal. Residues 121–125, Asp-305, and Leu-327 contribute to the UDP-N-acetyl-alpha-D-glucosamine site; that span reads RPIDL.

Belongs to the EPSP synthase family. MurA subfamily.

Its subcellular location is the cytoplasm. The enzyme catalyses phosphoenolpyruvate + UDP-N-acetyl-alpha-D-glucosamine = UDP-N-acetyl-3-O-(1-carboxyvinyl)-alpha-D-glucosamine + phosphate. The protein operates within cell wall biogenesis; peptidoglycan biosynthesis. Cell wall formation. Adds enolpyruvyl to UDP-N-acetylglucosamine. This Campylobacter jejuni subsp. jejuni serotype O:6 (strain 81116 / NCTC 11828) protein is UDP-N-acetylglucosamine 1-carboxyvinyltransferase.